The primary structure comprises 306 residues: UDP-N-acetylenolpyruvoylglucosamine reductase (306 aa).

Positions 25–188 (RVGGPADWLF…IEARFRAEPG (164 aa)) constitute an FAD-binding PCMH-type domain. Residue arginine 168 is part of the active site. The segment covering 199–214 (EQLARRDASQPTKDRS) has biased composition (basic and acidic residues). Positions 199–232 (EQLARRDASQPTKDRSAGSTFRNPAGYSSTGRAD) are disordered. Residues 215–229 (AGSTFRNPAGYSSTG) show a composition bias toward polar residues. Serine 217 serves as the catalytic Proton donor. Glutamate 299 is a catalytic residue.

Belongs to the MurB family. Requires FAD as cofactor.

It localises to the cytoplasm. It carries out the reaction UDP-N-acetyl-alpha-D-muramate + NADP(+) = UDP-N-acetyl-3-O-(1-carboxyvinyl)-alpha-D-glucosamine + NADPH + H(+). Its pathway is cell wall biogenesis; peptidoglycan biosynthesis. Functionally, cell wall formation. This is UDP-N-acetylenolpyruvoylglucosamine reductase from Paracoccus denitrificans (strain Pd 1222).